We begin with the raw amino-acid sequence, 752 residues long: Phosphoribosylformylglycinamidine synthase subunit PurL (752 aa).

Residue histidine 58 is part of the active site. Positions 61 and 103 each coordinate ATP. Glutamate 105 is a Mg(2+) binding site. Substrate-binding positions include serine 106 to histidine 109 and arginine 128. Catalysis depends on histidine 107, which acts as the Proton acceptor. A Mg(2+)-binding site is contributed by aspartate 129. Glutamine 253 serves as a coordination point for substrate. Aspartate 281 serves as a coordination point for Mg(2+). Glutamate 325–glutamine 327 serves as a coordination point for substrate. Residues aspartate 513 and glycine 550 each contribute to the ATP site. Position 551 (asparagine 551) interacts with Mg(2+). Position 553 (serine 553) interacts with substrate.

This sequence belongs to the FGAMS family. Monomer. Part of the FGAM synthase complex composed of 1 PurL, 1 PurQ and 2 PurS subunits.

It localises to the cytoplasm. It catalyses the reaction N(2)-formyl-N(1)-(5-phospho-beta-D-ribosyl)glycinamide + L-glutamine + ATP + H2O = 2-formamido-N(1)-(5-O-phospho-beta-D-ribosyl)acetamidine + L-glutamate + ADP + phosphate + H(+). The protein operates within purine metabolism; IMP biosynthesis via de novo pathway; 5-amino-1-(5-phospho-D-ribosyl)imidazole from N(2)-formyl-N(1)-(5-phospho-D-ribosyl)glycinamide: step 1/2. In terms of biological role, part of the phosphoribosylformylglycinamidine synthase complex involved in the purines biosynthetic pathway. Catalyzes the ATP-dependent conversion of formylglycinamide ribonucleotide (FGAR) and glutamine to yield formylglycinamidine ribonucleotide (FGAM) and glutamate. The FGAM synthase complex is composed of three subunits. PurQ produces an ammonia molecule by converting glutamine to glutamate. PurL transfers the ammonia molecule to FGAR to form FGAM in an ATP-dependent manner. PurS interacts with PurQ and PurL and is thought to assist in the transfer of the ammonia molecule from PurQ to PurL. In Streptomyces avermitilis (strain ATCC 31267 / DSM 46492 / JCM 5070 / NBRC 14893 / NCIMB 12804 / NRRL 8165 / MA-4680), this protein is Phosphoribosylformylglycinamidine synthase subunit PurL.